We begin with the raw amino-acid sequence, 2188 residues long: Glutamate synthase 2 [NADH], chloroplastic (2188 aa).

Residues 1 to 30 (MSAAQGLALKLRAAPAAGGVRGEKRRRAAS) constitute a chloroplast transit peptide. Disordered stretches follow at residues 14–40 (APAA…ARPR) and 61–94 (VAPR…PESS). The span at 65–80 (ASASRQAEAGAGAGAA) shows a compositional bias: low complexity. C107 acts as the Nucleophile in catalysis. The Glutamine amidotransferase type-2 domain occupies 107–511 (CGVGFIAELS…PGMMLLVDFE (405 aa)). FMN is bound at residue 1198–1255 (LAETHQTLVANGLRGRAVLQTDGQMKTGRDVAVACLLGAEEFGFSTAPLITLGCIMMR). [3Fe-4S] cluster is bound by residues C1251, C1257, and C1262. An NAD(+)-binding site is contributed by 1974–1988 (GGGDTGTDCIGTSIR).

The protein belongs to the glutamate synthase family. Monomer. It depends on [3Fe-4S] cluster as a cofactor. FAD is required as a cofactor. The cofactor is FMN. As to expression, expressed in leaf blades and sheaths.

It is found in the plastid. Its subcellular location is the chloroplast. It carries out the reaction 2 L-glutamate + NAD(+) = L-glutamine + 2-oxoglutarate + NADH + H(+). It participates in amino-acid biosynthesis; L-glutamate biosynthesis via GLT pathway; L-glutamate from 2-oxoglutarate and L-glutamine (NAD(+) route): step 1/1. The protein operates within energy metabolism; nitrogen metabolism. Its function is as follows. Involved in glutamate biosynthesis. The protein is Glutamate synthase 2 [NADH], chloroplastic of Oryza sativa subsp. japonica (Rice).